Reading from the N-terminus, the 413-residue chain is MSYSIVRVSKVKSGTNTTGIQKHVQRENNNYENEDIDHSKTYLNYDLVNANKQNFNNLIDEKIEQNYTGKRKIRTDAIKHIDGLITSDNDFFDNQTPEDTKQFFEYAKEFLEQEYGKDNLLYATVHMDEKTPHMHYGVVPITDDGRLSAKEVVGNKKALTAFQDRFNEHVKQRGYGLERGQSRQVTNAKHEQISQYKQKTEYHKQEYERESQKTDHIKQKNDKLMQEYQKSLNTLKKPINVPYEQETEKVGGLFSKEIQEAGNVVISQKDFNEFQKQIKAAQDISEDYEYIKSGRALDDKDKEIREKDDLLNKAVERIENADDNFNQLYENAKPLKENIEIALKLLKILLKELERVLGRNTFAERVNKLTEDEPKLNGLAGNLDKKMNPELYSEQEQQQEQQKNQKRDRGMHL.

2 residues coordinate DNA: Y45 and Y115. Disordered stretches follow at residues 175-198 (YGLE…QYKQ) and 374-413 (PKLN…GMHL). Composition is skewed to basic and acidic residues over residues 188-198 (AKHEQISQYKQ) and 403-413 (KNQKRDRGMHL).

Belongs to the plasmid mobilization pre family.

Functionally, the interaction of the RSA site and the PRE protein may not only serves a function in plasmid maintenance, but may also contributes to the distribution of small antibiotic resistance plasmids among Gram-positive bacteria. This Staphylococcus aureus protein is Plasmid recombination enzyme type 3 (pre).